Reading from the N-terminus, the 148-residue chain is Wheatwin-2 (148 aa).

The first 23 residues, 1 to 23 (MTMAARLMLVAALLCAAAAAATA), serve as a signal peptide directing secretion. Glutamine 24 carries the post-translational modification Pyrrolidone carboxylic acid. Residues 24–148 (QQATNVRATY…VNYQFVDCRD (125 aa)) form the Barwin domain. 3 disulfide bridges follow: cysteine 54/cysteine 86, cysteine 75/cysteine 109, and cysteine 89/cysteine 146.

Monomer.

Functionally, shows antifungal activity towards B.cinerea and towards the wheat-specific pathogenic fungi F.culmorum and F.graminearum (groups 1 and 2). This is Wheatwin-2 (PR4B) from Triticum aestivum (Wheat).